A 975-amino-acid polypeptide reads, in one-letter code: Glycine dehydrogenase (decarboxylating) (975 aa).

The residue at position 723 (Lys723) is an N6-(pyridoxal phosphate)lysine.

This sequence belongs to the GcvP family. As to quaternary structure, the glycine cleavage system is composed of four proteins: P, T, L and H. Pyridoxal 5'-phosphate serves as cofactor.

The catalysed reaction is N(6)-[(R)-lipoyl]-L-lysyl-[glycine-cleavage complex H protein] + glycine + H(+) = N(6)-[(R)-S(8)-aminomethyldihydrolipoyl]-L-lysyl-[glycine-cleavage complex H protein] + CO2. The glycine cleavage system catalyzes the degradation of glycine. The P protein binds the alpha-amino group of glycine through its pyridoxal phosphate cofactor; CO(2) is released and the remaining methylamine moiety is then transferred to the lipoamide cofactor of the H protein. This is Glycine dehydrogenase (decarboxylating) from Burkholderia ambifaria (strain MC40-6).